The following is a 1183-amino-acid chain: DNA-directed RNA polymerase subunit beta (1183 aa).

The span at 1149 to 1162 shows a compositional bias: acidic residues; it reads DNEIEMADVDDEDA. Positions 1149–1183 are disordered; it reads DNEIEMADVDDEDATERKVDLQQKDVPETQKETTD. Positions 1163–1183 are enriched in basic and acidic residues; it reads TERKVDLQQKDVPETQKETTD.

This sequence belongs to the RNA polymerase beta chain family. In terms of assembly, the RNAP catalytic core consists of 2 alpha, 1 beta, 1 beta' and 1 omega subunit. When a sigma factor is associated with the core the holoenzyme is formed, which can initiate transcription.

The catalysed reaction is RNA(n) + a ribonucleoside 5'-triphosphate = RNA(n+1) + diphosphate. DNA-dependent RNA polymerase catalyzes the transcription of DNA into RNA using the four ribonucleoside triphosphates as substrates. The protein is DNA-directed RNA polymerase subunit beta of Staphylococcus haemolyticus (strain JCSC1435).